The sequence spans 366 residues: tRNA/tmRNA (uracil-C(5))-methyltransferase (366 aa).

S-adenosyl-L-methionine is bound by residues Gln190, Tyr218, Asn223, Glu239, and Asp299. Cys324 functions as the Nucleophile in the catalytic mechanism. The active-site Proton acceptor is Glu358.

Belongs to the class I-like SAM-binding methyltransferase superfamily. RNA M5U methyltransferase family. TrmA subfamily.

The catalysed reaction is uridine(54) in tRNA + S-adenosyl-L-methionine = 5-methyluridine(54) in tRNA + S-adenosyl-L-homocysteine + H(+). It catalyses the reaction uridine(341) in tmRNA + S-adenosyl-L-methionine = 5-methyluridine(341) in tmRNA + S-adenosyl-L-homocysteine + H(+). Functionally, dual-specificity methyltransferase that catalyzes the formation of 5-methyluridine at position 54 (m5U54) in all tRNAs, and that of position 341 (m5U341) in tmRNA (transfer-mRNA). In Klebsiella pneumoniae subsp. pneumoniae (strain ATCC 700721 / MGH 78578), this protein is tRNA/tmRNA (uracil-C(5))-methyltransferase.